The primary structure comprises 680 residues: DNA-directed RNA polymerase subunit beta' (680 aa).

Residues Cys-69, Cys-71, Cys-87, and Cys-90 each coordinate Zn(2+). Mg(2+) contacts are provided by Asp-489, Asp-491, and Asp-493.

It belongs to the RNA polymerase beta' chain family. RpoC1 subfamily. As to quaternary structure, in plastids the minimal PEP RNA polymerase catalytic core is composed of four subunits: alpha, beta, beta', and beta''. When a (nuclear-encoded) sigma factor is associated with the core the holoenzyme is formed, which can initiate transcription. Mg(2+) serves as cofactor. It depends on Zn(2+) as a cofactor.

It is found in the plastid. It localises to the chloroplast. The enzyme catalyses RNA(n) + a ribonucleoside 5'-triphosphate = RNA(n+1) + diphosphate. DNA-dependent RNA polymerase catalyzes the transcription of DNA into RNA using the four ribonucleoside triphosphates as substrates. This is DNA-directed RNA polymerase subunit beta' from Arabis hirsuta (Hairy rock-cress).